The primary structure comprises 87 residues: uncharacterized protein (87 aa).

A run of 2 helical transmembrane segments spans residues 10-30 (VAFT…FSIG) and 43-63 (GYYI…QKVT).

It is found in the cell membrane. This is an uncharacterized protein from Bacillus subtilis (strain 168).